Here is a 466-residue protein sequence, read N- to C-terminus: Coagulation factor IX (466 aa).

An N-terminal signal peptide occupies residues 1–25; that stretch reads MRCLNMIMAEPPGLITICLLGYLLG. A propeptide spanning residues 26–46 is cleaved from the precursor; sequence ADCTVFLDHEDATKVLSRPKR. The Ca(2+) site is built by Tyr47, Asn48, Glu53, Glu54, Glu61, Glu63, Glu66, Glu67, Glu72, Glu73, and Glu76. Residues 47 to 92 form the Gla domain; that stretch reads YNSGKLEEFVQGNLERECMEEKCSFEEAREVFENTEKTTEFWKQYV. A 4-carboxyglutamate mark is found at Glu53, Glu54, Glu61, Glu63, Glu66, Glu67, Glu72, Glu73, Glu76, Glu79, and Glu82. Glu61 contributes to the Mg(2+) binding site. A disulfide bridge connects residues Cys64 and Cys69. Glu66 is a binding site for Mg(2+). Residue Glu72 participates in Mg(2+) binding. Glu76 is a binding site for Mg(2+). Residue Glu82 participates in Ca(2+) binding. A Mg(2+)-binding site is contributed by Glu82. Residue Thr85 is glycosylated (O-linked (GalNAc...) threonine). The Ca(2+) site is built by Glu86, Asp93, Gly94, and Gln96. 4-carboxyglutamate is present on Glu86. Residue Glu86 participates in Mg(2+) binding. An EGF-like 1; calcium-binding domain is found at 93-129; sequence DGDQCESNPCLNGGICKDDINSYECWCQTGFEGKNCE. Disulfide bonds link Cys97/Cys108, Cys102/Cys117, Cys119/Cys128, Cys134/Cys145, Cys141/Cys155, Cys157/Cys170, Cys178/Cys340, Cys257/Cys273, Cys387/Cys401, and Cys412/Cys440. Residue Ser99 is glycosylated (O-linked (Glc...) serine). Residues Asp110 and Asp111 each contribute to the Ca(2+) site. Asp110 carries the (3R)-3-hydroxyaspartate modification. Position 114 is a phosphoserine (Ser114). The EGF-like 2 domain maps to 130-171; that stretch reads LDVTCNIKNGRCKQFCKLDADNKVVCSCTTGYQLAEDQKSCE. Residues 193–231 constitute a propeptide, activation peptide; sequence AETLFLNMDYENSTTDYENSAEAEKNVDNVTQPLNDLTR. Position 202 is a sulfotyrosine (Tyr202). At Ser205 the chain carries Phosphoserine. Residue Thr206 is modified to Phosphothreonine; alternate. Thr206 is a glycosylation site (O-linked (GalNAc...) threonine; alternate). The N-linked (GlcNAc...) asparagine glycan is linked to Asn221. O-linked (GalNAc...) threonine glycosylation is found at Thr223 and Thr230. The Peptidase S1 domain occupies 232 to 464; it reads IVGGKTAKPG…YVNWIKEKTK (233 aa). The Charge relay system role is filled by His272. Residues Glu286, Asn288, Glu291, Glu293, and Glu296 each contribute to the Ca(2+) site. Asp320 acts as the Charge relay system in catalysis. Ser416 functions as the Charge relay system in the catalytic mechanism.

This sequence belongs to the peptidase S1 family. As to quaternary structure, heterodimer of a light chain and a heavy chain; disulfide-linked. Interacts (inactive and activated) with F11 (activated) in calcium-dependent manner. Interacts with SERPINC1. In terms of processing, the iron and 2-oxoglutarate dependent 3-hydroxylation of aspartate and asparagine is (R) stereospecific within EGF domains. Post-translationally, activated by factor XIa, which excises the activation peptide. The propeptide can also be removed by snake venom protease. Activated by coagulation factor VIIa-tissue factor (F7-F3) complex in calcium-dependent manner. Predominantly O-glucosylated at Ser-99 by POGLUT1 in vitro.

Its subcellular location is the secreted. It catalyses the reaction Selective cleavage of Arg-|-Ile bond in factor X to form factor Xa.. Factor IX is a vitamin K-dependent plasma protein that participates in the intrinsic pathway of blood coagulation by converting factor X to its active form in the presence of Ca(2+) ions, phospholipids, and factor VIIIa. This is Coagulation factor IX (F9) from Felis catus (Cat).